The sequence spans 354 residues: Holliday junction branch migration complex subunit RuvB (354 aa).

The segment at 4–190 (TDKLAAERII…FGIVARLEFY (187 aa)) is large ATPase domain (RuvB-L). ATP-binding positions include Leu-29, Arg-30, Gly-71, Lys-74, Thr-75, Thr-76, 137–139 (EDY), Arg-180, Tyr-190, and Arg-227. Residue Thr-75 coordinates Mg(2+). The interval 191-261 (DADQLARIVR…VADAALAMLD (71 aa)) is small ATPAse domain (RuvB-S). The segment at 264-354 (PVGFDLMDRK…RGMWDTPAGK (91 aa)) is head domain (RuvB-H). Residues Arg-300, Arg-319, and Arg-324 each coordinate DNA.

Belongs to the RuvB family. In terms of assembly, homohexamer. Forms an RuvA(8)-RuvB(12)-Holliday junction (HJ) complex. HJ DNA is sandwiched between 2 RuvA tetramers; dsDNA enters through RuvA and exits via RuvB. An RuvB hexamer assembles on each DNA strand where it exits the tetramer. Each RuvB hexamer is contacted by two RuvA subunits (via domain III) on 2 adjacent RuvB subunits; this complex drives branch migration. In the full resolvosome a probable DNA-RuvA(4)-RuvB(12)-RuvC(2) complex forms which resolves the HJ.

Its subcellular location is the cytoplasm. The catalysed reaction is ATP + H2O = ADP + phosphate + H(+). Functionally, the RuvA-RuvB-RuvC complex processes Holliday junction (HJ) DNA during genetic recombination and DNA repair, while the RuvA-RuvB complex plays an important role in the rescue of blocked DNA replication forks via replication fork reversal (RFR). RuvA specifically binds to HJ cruciform DNA, conferring on it an open structure. The RuvB hexamer acts as an ATP-dependent pump, pulling dsDNA into and through the RuvAB complex. RuvB forms 2 homohexamers on either side of HJ DNA bound by 1 or 2 RuvA tetramers; 4 subunits per hexamer contact DNA at a time. Coordinated motions by a converter formed by DNA-disengaged RuvB subunits stimulates ATP hydrolysis and nucleotide exchange. Immobilization of the converter enables RuvB to convert the ATP-contained energy into a lever motion, pulling 2 nucleotides of DNA out of the RuvA tetramer per ATP hydrolyzed, thus driving DNA branch migration. The RuvB motors rotate together with the DNA substrate, which together with the progressing nucleotide cycle form the mechanistic basis for DNA recombination by continuous HJ branch migration. Branch migration allows RuvC to scan DNA until it finds its consensus sequence, where it cleaves and resolves cruciform DNA. This Burkholderia ambifaria (strain MC40-6) protein is Holliday junction branch migration complex subunit RuvB.